Reading from the N-terminus, the 458-residue chain is UPF0210 protein MmarC6_1246 (458 aa).

Belongs to the UPF0210 family.

This chain is UPF0210 protein MmarC6_1246, found in Methanococcus maripaludis (strain C6 / ATCC BAA-1332).